The chain runs to 367 residues: tRNA/tmRNA (uracil-C(5))-methyltransferase (367 aa).

Q189, Y217, N222, E238, and D298 together coordinate S-adenosyl-L-methionine. The active-site Nucleophile is the C323. Catalysis depends on E357, which acts as the Proton acceptor.

This sequence belongs to the class I-like SAM-binding methyltransferase superfamily. RNA M5U methyltransferase family. TrmA subfamily.

It carries out the reaction uridine(54) in tRNA + S-adenosyl-L-methionine = 5-methyluridine(54) in tRNA + S-adenosyl-L-homocysteine + H(+). It catalyses the reaction uridine(341) in tmRNA + S-adenosyl-L-methionine = 5-methyluridine(341) in tmRNA + S-adenosyl-L-homocysteine + H(+). Dual-specificity methyltransferase that catalyzes the formation of 5-methyluridine at position 54 (m5U54) in all tRNAs, and that of position 341 (m5U341) in tmRNA (transfer-mRNA). The chain is tRNA/tmRNA (uracil-C(5))-methyltransferase from Pseudoalteromonas translucida (strain TAC 125).